The primary structure comprises 449 residues: MVELWQGLGCVFTPEKLLKFITTLTSNSNFCIAYSGGIDSHVLVHAMSHLCQEHPWQLRALHINHGLNPKANDWENHCQQICNRLKIPFQSERVTLSLQPGDSIEAVARKARYAIFQQALSENETLLTAHTENDQAETFLLQLLRGAGVKGLSAMPAKRKLGKGELVRPLLAITRDDLKKYAEKNNLRWVEDDTNLELRFNRNYLRHEVLPILRRRWPEVFAVISRSANHCAEAALLLDQLAESDLQLIQKDSELEILPLLQLTPERQRNVLRRWIYLHGFQLPQTKQLEQIRNDVLLAAHDANPVFSYHTIEIRRHHGKLYLSNALSAHNATPLISWNFSRSLPLPGDLGTLIAEKKKGVGIKTTLDTSKITVRFRQGGEQCQPAGRKETHTLKKLMQEWKIPVWQRDRVPLIYLGDKLIAVVGYCICEGFEAKGEEWGWNVEVQPPK.

35–40 lines the ATP pocket; sequence SGGIDS.

This sequence belongs to the tRNA(Ile)-lysidine synthase family.

The protein localises to the cytoplasm. It catalyses the reaction cytidine(34) in tRNA(Ile2) + L-lysine + ATP = lysidine(34) in tRNA(Ile2) + AMP + diphosphate + H(+). Its function is as follows. Ligates lysine onto the cytidine present at position 34 of the AUA codon-specific tRNA(Ile) that contains the anticodon CAU, in an ATP-dependent manner. Cytidine is converted to lysidine, thus changing the amino acid specificity of the tRNA from methionine to isoleucine. This is tRNA(Ile)-lysidine synthase from Coxiella burnetii (strain RSA 493 / Nine Mile phase I).